Here is a 150-residue protein sequence, read N- to C-terminus: Flagellar assembly factor FliW (150 aa).

This sequence belongs to the FliW family. As to quaternary structure, interacts with translational regulator CsrA and flagellin(s).

It is found in the cytoplasm. In terms of biological role, acts as an anti-CsrA protein, binds CsrA and prevents it from repressing translation of its target genes, one of which is flagellin. Binds to flagellin and participates in the assembly of the flagellum. The chain is Flagellar assembly factor FliW from Caldanaerobacter subterraneus subsp. tengcongensis (strain DSM 15242 / JCM 11007 / NBRC 100824 / MB4) (Thermoanaerobacter tengcongensis).